Consider the following 124-residue polypeptide: Small ribosomal subunit protein uS12 (124 aa).

3-methylthioaspartic acid is present on Asp89.

The protein belongs to the universal ribosomal protein uS12 family. As to quaternary structure, part of the 30S ribosomal subunit. Contacts proteins S8 and S17. May interact with IF1 in the 30S initiation complex.

Its function is as follows. With S4 and S5 plays an important role in translational accuracy. In terms of biological role, interacts with and stabilizes bases of the 16S rRNA that are involved in tRNA selection in the A site and with the mRNA backbone. Located at the interface of the 30S and 50S subunits, it traverses the body of the 30S subunit contacting proteins on the other side and probably holding the rRNA structure together. The combined cluster of proteins S8, S12 and S17 appears to hold together the shoulder and platform of the 30S subunit. The chain is Small ribosomal subunit protein uS12 from Leptospira biflexa serovar Patoc (strain Patoc 1 / Ames).